Consider the following 317-residue polypeptide: Egg-laying defective protein 26 (317 aa).

The 122-residue stretch at 156–277 (EVNVSGVKFY…CSTGVPFSYD (122 aa)) folds into the LRAT domain. Active-site residues include His-166 and His-178. Cys-261 (acyl-thioester intermediate) is an active-site residue.

Highly expressed in the cells of the spermatheca, the mouth, and the lining of the pharynx, the rectum, and the excretory canal. Also expressed in the pharyngeal intestinal junction cell.

It localises to the apical cell membrane. Its function is as follows. Putative acyltransferase. Plays a role in the morphogenesis of a vulval toroid cell, vulF, which is located where the vulva and the uterus connect. Not required for specifying vulval cell fate. The polypeptide is Egg-laying defective protein 26 (Caenorhabditis elegans).